A 307-amino-acid chain; its full sequence is Oxygen-dependent coproporphyrinogen-III oxidase (307 aa).

Substrate is bound at residue serine 99. Residues histidine 103 and histidine 113 each coordinate a divalent metal cation. Catalysis depends on histidine 113, which acts as the Proton donor. Residue 115-117 (NVR) participates in substrate binding. A divalent metal cation-binding residues include histidine 152 and histidine 182. Positions 247–282 (YVEFNLVFDRGTLFGLQSGGRTESILMSMPPVVNWR) are important for dimerization. Position 265–267 (265–267 (GGR)) interacts with substrate.

This sequence belongs to the aerobic coproporphyrinogen-III oxidase family. In terms of assembly, homodimer. A divalent metal cation is required as a cofactor.

Its subcellular location is the cytoplasm. It catalyses the reaction coproporphyrinogen III + O2 + 2 H(+) = protoporphyrinogen IX + 2 CO2 + 2 H2O. Its pathway is porphyrin-containing compound metabolism; protoporphyrin-IX biosynthesis; protoporphyrinogen-IX from coproporphyrinogen-III (O2 route): step 1/1. Its function is as follows. Involved in the heme biosynthesis. Catalyzes the aerobic oxidative decarboxylation of propionate groups of rings A and B of coproporphyrinogen-III to yield the vinyl groups in protoporphyrinogen-IX. The polypeptide is Oxygen-dependent coproporphyrinogen-III oxidase (Paraburkholderia phytofirmans (strain DSM 17436 / LMG 22146 / PsJN) (Burkholderia phytofirmans)).